The following is a 379-amino-acid chain: Cytochrome b (379 aa).

A run of 4 helical transmembrane segments spans residues 33–53 (FGSLLGMCLVLQIFTGLFLAM), 77–98 (WLIRYMHANGASLFFICLYIHI), 113–133 (WNIGILLLFLTMATAFVGYVL), and 178–198 (FFAFHFILPFIIAALATVHLL). Residues histidine 83 and histidine 97 each contribute to the heme b site. 2 residues coordinate heme b: histidine 182 and histidine 196. Histidine 201 contributes to the a ubiquinone binding site. The next 4 helical transmembrane spans lie at 226–246 (TKDFLGALIXIMFFMTLVLYF), 288–308 (LGGVVALILSILVLALLPYIH), 320–340 (ISQFLFWTLVSDLLLLTWIGG), and 347–367 (FIIIGQTASXMYFTIILIXMX).

The protein belongs to the cytochrome b family. As to quaternary structure, the cytochrome bc1 complex contains 11 subunits: 3 respiratory subunits (MT-CYB, CYC1 and UQCRFS1), 2 core proteins (UQCRC1 and UQCRC2) and 6 low-molecular weight proteins (UQCRH/QCR6, UQCRB/QCR7, UQCRQ/QCR8, UQCR10/QCR9, UQCR11/QCR10 and a cleavage product of UQCRFS1). This cytochrome bc1 complex then forms a dimer. Requires heme b as cofactor.

It is found in the mitochondrion inner membrane. Functionally, component of the ubiquinol-cytochrome c reductase complex (complex III or cytochrome b-c1 complex) that is part of the mitochondrial respiratory chain. The b-c1 complex mediates electron transfer from ubiquinol to cytochrome c. Contributes to the generation of a proton gradient across the mitochondrial membrane that is then used for ATP synthesis. The chain is Cytochrome b (MT-CYB) from Thomomys umbrinus (Southern pocket gopher).